A 286-amino-acid chain; its full sequence is Beta-lactamase SHV-34 (286 aa).

The N-terminal stretch at 1-21 is a signal peptide; the sequence is MRYFRLCIISLLATLPLAVHA. Residue Ser-66 is the Acyl-ester intermediate of the active site. A disulfide bridge links Cys-73 with Cys-119. Glu-164 serves as the catalytic Proton acceptor. 230-232 serves as a coordination point for substrate; the sequence is KTG.

It belongs to the class-A beta-lactamase family.

The catalysed reaction is a beta-lactam + H2O = a substituted beta-amino acid. Its function is as follows. Hydrolyzes ceftazidime and cefotaxime. In Escherichia coli, this protein is Beta-lactamase SHV-34 (bla).